Consider the following 428-residue polypeptide: Peptidase B (428 aa).

Mn(2+)-binding residues include K195 and D200. K207 is an active-site residue. Mn(2+) is bound by residues D218, D277, and E279. R281 is a catalytic residue.

It belongs to the peptidase M17 family. As to quaternary structure, homohexamer. Mn(2+) is required as a cofactor.

The protein resides in the cytoplasm. The enzyme catalyses Release of an N-terminal amino acid, Xaa, from a peptide or arylamide. Xaa is preferably Glu or Asp but may be other amino acids, including Leu, Met, His, Cys and Gln.. Functionally, probably plays an important role in intracellular peptide degradation. The chain is Peptidase B from Enterobacter sp. (strain 638).